The sequence spans 359 residues: Cyclic AMP response element-binding protein B (359 aa).

2 disordered regions span residues 1-73 (MDNS…AQGG) and 185-238 (VRNK…FTEI). Low complexity predominate over residues 9-32 (NGNSSAASGSNDVVDVVAQQAAAA). The segment covering 33–47 (VGGGGGGGGGGGGGN) has biased composition (gly residues). Over residues 48 to 70 (PQQQQQNPQSTTAGGPTGATNNA) the composition is skewed to low complexity. The KID domain occupies 198–257 (KPEPNTQHPEDSDESLSDDDSQHHRSELTRRPSYNKIFTEISGPDMSGASLPMSDGVLNS). Phosphoserine occurs at positions 209, 212, and 214. Basic and acidic residues predominate over residues 217–227 (DSQHHRSELTR). The 60-residue stretch at 300-359 (TRKREIRLQKNREAARECRRKKKEYIKCLENRVAVLENQNKALIEELKSLKELYCQTKND) folds into the bZIP domain. The interval 301 to 326 (RKREIRLQKNREAARECRRKKKEYIK) is basic motif. A leucine-zipper region spans residues 328 to 349 (LENRVAVLENQNKALIEELKSL).

Belongs to the bZIP family. ATF subfamily. Homodimer. In terms of tissue distribution, most cells of the adult brain; cell bodies, but not neuropil.

The protein localises to the nucleus. Isoform E is a PKA-dependent transcriptional activator. Isoform J is a direct antagonist of activation by isoform E in cell culture. Binds the cAMP response element (CRE) (consensus: 5'-GTGACGT[AC][AG]-3'), a sequence present in many viral and cellular promoters. Has a role in long-term memory. The sequence is that of Cyclic AMP response element-binding protein B from Drosophila melanogaster (Fruit fly).